A 363-amino-acid polypeptide reads, in one-letter code: tRNA dimethylallyltransferase (363 aa).

65–72 is an ATP binding site; sequence GPTASGKS. 67–72 is a binding site for substrate; that stretch reads TASGKS. Interaction with substrate tRNA regions lie at residues 90-93 and 214-218; these read DSMQ and QRLIR.

Belongs to the IPP transferase family. As to quaternary structure, monomer. Requires Mg(2+) as cofactor.

The enzyme catalyses adenosine(37) in tRNA + dimethylallyl diphosphate = N(6)-dimethylallyladenosine(37) in tRNA + diphosphate. Functionally, catalyzes the transfer of a dimethylallyl group onto the adenine at position 37 in tRNAs that read codons beginning with uridine, leading to the formation of N6-(dimethylallyl)adenosine (i(6)A). The polypeptide is tRNA dimethylallyltransferase (Rickettsia massiliae (strain Mtu5)).